We begin with the raw amino-acid sequence, 470 residues long: Fumarate hydratase class II (470 aa).

Residues 99–101, 129–132, 139–141, and Thr187 contribute to the substrate site; these read SGT, HPND, and SSN. His188 serves as the catalytic Proton donor/acceptor. Ser318 is an active-site residue. Substrate-binding positions include Ser319 and 324 to 326; that span reads KIN.

The protein belongs to the class-II fumarase/aspartase family. Fumarase subfamily. Homotetramer.

The protein resides in the cytoplasm. It carries out the reaction (S)-malate = fumarate + H2O. It participates in carbohydrate metabolism; tricarboxylic acid cycle; (S)-malate from fumarate: step 1/1. Its function is as follows. Involved in the TCA cycle. Catalyzes the stereospecific interconversion of fumarate to L-malate. The sequence is that of Fumarate hydratase class II from Halobacterium salinarum (strain ATCC 700922 / JCM 11081 / NRC-1) (Halobacterium halobium).